A 305-amino-acid polypeptide reads, in one-letter code: MSSDLDRQIEQLKRCEIIKESEVRALCSKAREILLEEGNVQRVDSPVTICGDIHGQFYDLKELFKVGGDCPQTNYLFMGDFVDRGFYSVETFLLLLALKVRYPDRITLIRGNHESRQITQVYGFYEECVRKYGSVTVWKYCTEIFDYLSLSALVDGKIFCVHGGLSPSINTLDQIRAIDRKQEVPHEGPMCDLMWSDPEDIPGWNGSPRGAGFLFGEDVVQKFNHDNNLEFICRAHQLVMEGFKYMFNETLVTVWSAPNYCYRCGNVAAILQLDENLKKNFAIFEAAPQESRGAPAKKPAPEYFL.

Mn(2+) is bound by residues aspartate 52, histidine 54, aspartate 80, and asparagine 112. Histidine 113 (proton donor) is an active-site residue. Mn(2+)-binding residues include histidine 162 and histidine 236.

The protein belongs to the PPP phosphatase family. PP-4 (PP-X) subfamily. As to quaternary structure, serine/threonine-protein phosphatase 4 (PP4) occurs in different assemblies of the catalytic and one or more regulatory subunits. Probably part of a PP4 complex containing ppp4c and ppp4r2. Interacts with smkA. The cofactor is Mn(2+).

The protein localises to the cytoplasm. It is found in the nucleus. The enzyme catalyses O-phospho-L-seryl-[protein] + H2O = L-seryl-[protein] + phosphate. It carries out the reaction O-phospho-L-threonyl-[protein] + H2O = L-threonyl-[protein] + phosphate. Required for development, chemotaxis and the expression of numerous genes. The polypeptide is Serine/threonine-protein phosphatase 4 catalytic subunit (ppp4c) (Dictyostelium discoideum (Social amoeba)).